Consider the following 225-residue polypeptide: NAD(P)H-quinone oxidoreductase subunit K, chloroplastic (225 aa).

Residues C43, C44, C108, and C139 each coordinate [4Fe-4S] cluster.

The protein belongs to the complex I 20 kDa subunit family. As to quaternary structure, NDH is composed of at least 16 different subunits, 5 of which are encoded in the nucleus. Requires [4Fe-4S] cluster as cofactor.

It is found in the plastid. The protein resides in the chloroplast thylakoid membrane. The enzyme catalyses a plastoquinone + NADH + (n+1) H(+)(in) = a plastoquinol + NAD(+) + n H(+)(out). The catalysed reaction is a plastoquinone + NADPH + (n+1) H(+)(in) = a plastoquinol + NADP(+) + n H(+)(out). Functionally, NDH shuttles electrons from NAD(P)H:plastoquinone, via FMN and iron-sulfur (Fe-S) centers, to quinones in the photosynthetic chain and possibly in a chloroplast respiratory chain. The immediate electron acceptor for the enzyme in this species is believed to be plastoquinone. Couples the redox reaction to proton translocation, and thus conserves the redox energy in a proton gradient. This chain is NAD(P)H-quinone oxidoreductase subunit K, chloroplastic, found in Draba nemorosa (Woodland whitlowgrass).